The primary structure comprises 648 residues: Copper methylamine oxidase (648 aa).

The propeptide occupies 1–9 (MTLNAESEA). 299–310 (AFDSGEYNIGNM) lines the substrate pocket. Residue D301 is the Proton acceptor of the active site. Cysteines 320 and 346 form a disulfide. 382-387 (VANYEY) is a substrate binding site. Catalysis depends on Y385, which acts as the Schiff-base intermediate with substrate; via topaquinone. Position 385 is a 2',4',5'-topaquinone (Y385). Positions 436 and 438 each coordinate Cu cation. D445, F446, and D584 together coordinate Mn(2+). A Cu cation-binding site is contributed by H595. A disordered region spans residues 629–648 (PTSTSTTQTGEADTCCHTDK).

This sequence belongs to the copper/topaquinone oxidase family. Homodimer. Requires Cu cation as cofactor. Zn(2+) is required as a cofactor. The cofactor is L-topaquinone. Mn(2+) serves as cofactor. Post-translationally, topaquinone (TPQ) is generated by copper-dependent autoxidation of a specific tyrosyl residue.

It catalyses the reaction a primary methyl amine + O2 + H2O = an aldehyde + H2O2 + NH4(+). In Arthrobacter sp. (strain P1), this protein is Copper methylamine oxidase (maoII).